The chain runs to 419 residues: MAQHNAFYAQSGGVTAVINASACGVIEACRRHDDRIGKVYAGHNGIIGALTEDLIDVSQESDEAIAALRHTPAGAFGSCRYKLKDIETHRTQYERLIEVFRAHDIRYFFYNGGGDSADTCLKVSQLSEKMGYPLTAIHVPKTVDNDLPITDNSPGFGSVAKYIATSTLEASLDIASMCATSTKVFVLEVMGRHAGWIAAAGALAGQGEGDPPHLVIFPEIDFDRAAVMARVEESVKKCGYCVIVVSEGARYEDGTFLADSGNTDAFGHRQLGGVAPTLAGMIKQDLGYKYHWAVADYLQRAARHLASKTDVDQAYAVGEKAVELALDGQNAKMPAIKRISDEPYAWTVEAAPLADVANREKFMPRDFIREDGFGITEQCRRYLAPLIQGEDFPPFENGLPKVAKLAKHRVERKLPEFKL.

Gly-13 contributes to the diphosphate binding site. Substrate contacts are provided by residues 142–144, 190–192, Glu-247, and 297–300; these read TVD, MGR, and YLQR. The active-site Proton acceptor is Asp-144.

It belongs to the phosphofructokinase type A (PFKA) family. PPi-dependent PFK group II subfamily. Clade 'B2' sub-subfamily. Homodimer. It depends on Mg(2+) as a cofactor.

It is found in the cytoplasm. The catalysed reaction is beta-D-fructose 6-phosphate + diphosphate = beta-D-fructose 1,6-bisphosphate + phosphate + H(+). Its pathway is carbohydrate degradation; glycolysis; D-glyceraldehyde 3-phosphate and glycerone phosphate from D-glucose: step 3/4. With respect to regulation, non-allosteric. In terms of biological role, catalyzes the phosphorylation of D-fructose 6-phosphate, the first committing step of glycolysis. Uses inorganic phosphate (PPi) as phosphoryl donor instead of ATP like common ATP-dependent phosphofructokinases (ATP-PFKs), which renders the reaction reversible, and can thus function both in glycolysis and gluconeogenesis. Consistently, PPi-PFK can replace the enzymes of both the forward (ATP-PFK) and reverse (fructose-bisphosphatase (FBPase)) reactions. This chain is Pyrophosphate--fructose 6-phosphate 1-phosphotransferase, found in Halomonas elongata (strain ATCC 33173 / DSM 2581 / NBRC 15536 / NCIMB 2198 / 1H9).